Reading from the N-terminus, the 486-residue chain is Cardiolipin synthase A (486 aa).

The next 2 helical transmembrane spans lie at 3–23 (TFYT…IASV) and 38–58 (MAWL…YLSF). PLD phosphodiesterase domains lie at 219 to 246 (MDLR…VDPR) and 399 to 426 (EGGL…DMRS). Active-site residues include His224, Lys226, Asp231, His404, Lys406, and Asp411.

This sequence belongs to the phospholipase D family. Cardiolipin synthase subfamily. ClsA sub-subfamily.

The protein resides in the cell inner membrane. The enzyme catalyses 2 a 1,2-diacyl-sn-glycero-3-phospho-(1'-sn-glycerol) = a cardiolipin + glycerol. Functionally, catalyzes the reversible phosphatidyl group transfer from one phosphatidylglycerol molecule to another to form cardiolipin (CL) (diphosphatidylglycerol) and glycerol. In Edwardsiella ictaluri (strain 93-146), this protein is Cardiolipin synthase A.